Here is a 489-residue protein sequence, read N- to C-terminus: L-arabinose isomerase (489 aa).

Mn(2+) is bound by residues Glu-300, Glu-325, His-342, and His-441.

The protein belongs to the arabinose isomerase family. It depends on Mn(2+) as a cofactor.

The catalysed reaction is beta-L-arabinopyranose = L-ribulose. It functions in the pathway carbohydrate degradation; L-arabinose degradation via L-ribulose; D-xylulose 5-phosphate from L-arabinose (bacterial route): step 1/3. Catalyzes the conversion of L-arabinose to L-ribulose. The protein is L-arabinose isomerase of Clostridium beijerinckii (strain ATCC 51743 / NCIMB 8052) (Clostridium acetobutylicum).